The sequence spans 595 residues: DNA-binding protein REB1 (595 aa).

Basic and acidic residues-rich tracts occupy residues 25–46 (KSGE…KEQD) and 54–71 (DPGR…RDAN). The interval 25–208 (KSGEDDAVNK…IDDHVDDVSV (184 aa)) is disordered. Low complexity predominate over residues 75–84 (AVAAAAVAAA). Over residues 114–123 (KKSKKNKNKL) the composition is skewed to basic residues. The segment covering 163-176 (NIASQHPDFQQYLN) has biased composition (polar residues). The span at 182 to 205 (EPKKEKSEERSYGDLSNIDDHVDD) shows a compositional bias: basic and acidic residues. The 52-residue stretch at 333 to 384 (HIFEQRGKWTPEEDAELARWCAEKEGQWSNIGKVLGRMPEDCRDRWRNYVKC) folds into the HTH myb-type domain. Positions 360–382 (WSNIGKVLGRMPEDCRDRWRNYV) form a DNA-binding region, H-T-H motif. A Myb-like domain is found at 385 to 490 (GPNRAANKWS…QCRYKWNKLL (106 aa)). The segment at 414 to 456 (TAYEDGEDDEMKDSSTKIEDSGDADMLDVQDSDKKPSISNSKK) is disordered. Residues 434–443 (SGDADMLDVQ) are compositionally biased toward acidic residues.

It localises to the nucleus. Its function is as follows. DNA-binding protein that recognizes sites within both the enhancer and the promoter of rRNA transcription, as well as upstream of many genes transcribed by RNA polymerase II. It is essential for cell growth. May stimulate or inhibit transcription. Specifically recognizes the sequence 5'-CCGGGTA-3' or 5'-CGGGTRR-3' (where R is any purine). This is DNA-binding protein REB1 (REB1) from Kluyveromyces lactis (strain ATCC 8585 / CBS 2359 / DSM 70799 / NBRC 1267 / NRRL Y-1140 / WM37) (Yeast).